A 211-amino-acid chain; its full sequence is SOSS complex subunit B1 (211 aa).

Residues 22–92 (IVLETGRVTK…TLYTGRGGDL (71 aa)) constitute a DNA-binding region (OB). The tract at residues 110–211 (EPNPEYSAQQ…GKETRRSSKR (102 aa)) is disordered. Polar residues predominate over residues 115-128 (YSAQQAPNKTVQND). Composition is skewed to pro residues over residues 133–143 (APQPPTGPPAT) and 165–174 (PHPPHTPSHP).

The protein belongs to the SOSS-B family. SOSS-B1 subfamily. In terms of assembly, component of the SOSS complex, composed of SOSS-B (SOSS-B1/NABP2 or SOSS-B2/NABP1), SOSS-A/INTS3 and SOSS-C/INIP. SOSS complexes containing SOSS-B1/NABP2 are more abundant than complexes containing SOSS-B2/NABP1. Directly interacts with ATM, SOSS-A/INTS3 and RAD51. Interacts with INTS7. Post-translationally, phosphorylated by ATM in response to DNA damage. Phosphorylation prevents degradation by the proteasome, hence stabilization of the protein and accumulation within cells. Ubiquitinated in a FBXL5-dependent manner, leading to proteasomal degradation.

The protein resides in the nucleus. Component of the SOSS complex, a multiprotein complex that functions downstream of the MRN complex to promote DNA repair and G2/M checkpoint. In the SOSS complex, acts as a sensor of single-stranded DNA that binds to single-stranded DNA, in particular to polypyrimidines. The SOSS complex associates with DNA lesions and influences diverse endpoints in the cellular DNA damage response including cell-cycle checkpoint activation, recombinational repair and maintenance of genomic stability. Required for efficient homologous recombination-dependent repair of double-strand breaks (DSBs) and ATM-dependent signaling pathways. The polypeptide is SOSS complex subunit B1 (NABP2) (Bos taurus (Bovine)).